Consider the following 389-residue polypeptide: S-adenosylmethionine synthase 2 (389 aa).

His17 is an ATP binding site. Asp19 provides a ligand contact to Mg(2+). Glu45 serves as a coordination point for K(+). L-methionine-binding residues include Glu58 and Gln102. Positions 102–112 (QSADIAVGVDA) are flexible loop. Residues 166–168 (DSK), 231–232 (RF), Asp240, 246–247 (RK), Ala263, and Lys267 contribute to the ATP site. Asp240 is an L-methionine binding site. Position 271 (Lys271) interacts with L-methionine.

The protein belongs to the AdoMet synthase family. In terms of assembly, homotetramer; dimer of dimers. It depends on Mg(2+) as a cofactor. Requires K(+) as cofactor.

The protein localises to the cytoplasm. It carries out the reaction L-methionine + ATP + H2O = S-adenosyl-L-methionine + phosphate + diphosphate. Its pathway is amino-acid biosynthesis; S-adenosyl-L-methionine biosynthesis; S-adenosyl-L-methionine from L-methionine: step 1/1. Catalyzes the formation of S-adenosylmethionine (AdoMet) from methionine and ATP. The overall synthetic reaction is composed of two sequential steps, AdoMet formation and the subsequent tripolyphosphate hydrolysis which occurs prior to release of AdoMet from the enzyme. The polypeptide is S-adenosylmethionine synthase 2 (Rhodospirillum rubrum (strain ATCC 11170 / ATH 1.1.1 / DSM 467 / LMG 4362 / NCIMB 8255 / S1)).